Consider the following 348-residue polypeptide: Uroporphyrinogen decarboxylase (348 aa).

Substrate-binding positions include 27–31 (RQAGR), Phe-46, Asp-76, Tyr-152, Ser-207, and His-320.

It belongs to the uroporphyrinogen decarboxylase family. In terms of assembly, homodimer.

It is found in the cytoplasm. The catalysed reaction is uroporphyrinogen III + 4 H(+) = coproporphyrinogen III + 4 CO2. It functions in the pathway porphyrin-containing compound metabolism; protoporphyrin-IX biosynthesis; coproporphyrinogen-III from 5-aminolevulinate: step 4/4. Functionally, catalyzes the decarboxylation of four acetate groups of uroporphyrinogen-III to yield coproporphyrinogen-III. This chain is Uroporphyrinogen decarboxylase, found in Bacillus anthracis.